Here is a 301-residue protein sequence, read N- to C-terminus: Ubiquitin thioesterase OTU1 (301 aa).

Residues 5–83 form a UBX-like region; that stretch reads RCKAKNGTHL…IVEEEKNKPK (79 aa). Positions 102–227 constitute an OTU domain; sequence VERRVVPADN…GIHYDPLQKV (126 aa). The cys-loop stretch occupies residues 107–113; sequence VPADNSC. Aspartate 110 is an active-site residue. Catalysis depends on cysteine 113, which acts as the Nucleophile. The tract at residues 166–176 is variable-loop; it reads IRRDDTWGGAI. The segment at 216–220 is his-loop; the sequence is YDGIH. A substrate-binding site is contributed by isoleucine 219. Residue histidine 220 is part of the active site. Positions 244-249 are S2 site; that stretch reads DVILAQ. A C2H2-type zinc finger spans residues 271–295; that stretch reads LRCMVCQTGLVGQKEAREHAKETGH. The active site involves histidine 295.

Its subcellular location is the cytoplasm. The catalysed reaction is Thiol-dependent hydrolysis of ester, thioester, amide, peptide and isopeptide bonds formed by the C-terminal Gly of ubiquitin (a 76-residue protein attached to proteins as an intracellular targeting signal).. Functionally, hydrolase that can remove conjugated ubiquitin from proteins and participates in endoplasmic reticulum-associated degradation (ERAD) for misfolded lumenal proteins. May act by triming the ubiquitin chain on the associated substrate to facilitate their threading through the VCP/p97 pore. Ubiquitin moieties on substrates may present a steric impediment to the threading process when the substrate is transferred to the VCP pore and threaded through VCP's axial channel. Mediates deubiquitination of 'Lys-27'-, 'Lys-29'- and 'Lys-33'-linked polyubiquitin chains. Also able to hydrolyze 'Lys-11'-linked ubiquitin chains. Cleaves both polyubiquitin and di-ubiquitin. In Danio rerio (Zebrafish), this protein is Ubiquitin thioesterase OTU1 (yod1).